The primary structure comprises 395 residues: Phosphopentomutase (395 aa).

Positions 12, 289, 294, 330, 331, and 342 each coordinate Mn(2+).

It belongs to the phosphopentomutase family. Mn(2+) is required as a cofactor.

It is found in the cytoplasm. The catalysed reaction is 2-deoxy-alpha-D-ribose 1-phosphate = 2-deoxy-D-ribose 5-phosphate. It catalyses the reaction alpha-D-ribose 1-phosphate = D-ribose 5-phosphate. The protein operates within carbohydrate degradation; 2-deoxy-D-ribose 1-phosphate degradation; D-glyceraldehyde 3-phosphate and acetaldehyde from 2-deoxy-alpha-D-ribose 1-phosphate: step 1/2. Its function is as follows. Isomerase that catalyzes the conversion of deoxy-ribose 1-phosphate (dRib-1-P) and ribose 1-phosphate (Rib-1-P) to deoxy-ribose 5-phosphate (dRib-5-P) and ribose 5-phosphate (Rib-5-P), respectively. This Levilactobacillus brevis (strain ATCC 367 / BCRC 12310 / CIP 105137 / JCM 1170 / LMG 11437 / NCIMB 947 / NCTC 947) (Lactobacillus brevis) protein is Phosphopentomutase.